We begin with the raw amino-acid sequence, 963 residues long: MASTTVAQLAAELSRSAAALLEQLQAAGVGKATPEDIITESDKTRLLDYLKRSHGQADDSARKKITLTKRETSEIRQSDATGKTRTVQVEVRKKRVLIKRDDAAPEHQADGAEAQAHVVDAAEEARREEEERRQAEQLARQEAEAKAAREAAEREEAERRARQEALEAEQRRQAELAARKAEEEAAASRAVTEANEDTSRKKAEDEKARVAAERAEAQKAADEAKAAADKARAEQEIAARKRREAAEAEARAIQQMLNAPARVLKAPSERKAEEKKAEQTGTLHKPVKPAGTEAKPGEKKPVTATATTTTDKKGKVVKAGTSSTWQDEGSRKKGSGLKTRGDSSGGVGGWRGGPRGRGGRQQQHDDSRSNFQAPTEPVVREVHVPETISVADLAHKMAVKASEVIKQMMKLGQMVTINQVLDQETAMIVVEEMGHKAYAAKLDDPEALLVVDGEEHEDAELLPRPPVVTVMGHVDHGKTSLLDYIRRTKVAAGEAGGITQHIGAYHVETDRGVITFLDTPGHEAFTAMRARGAKATDIVILVVAADDGVMPQTKEAIAHAKAAGVPIVVAINKVDKPEANPDRVKQELVAEQVVPEEYGGDSPFVPVSAKTGAGIEDLLEQVSLQAEVLELKAPVDAPAKGLVVEAQLDKGKGPIATILVSSGTLKRGDVVLAGSAYGRVRAMLDENGKATKEAGPSIPVEIQGLSEVPAAGEEVLVLPDERKAREIALFRQGKFRDVKLAKQQAAKLENMLEQMTEGEVQTLPLIVKADVQGSQEALVQSLQKLSTAEVRVQIVHGGVGGISESDVNLATASKAVIIGFNVRADAGARKLAEHNGIDIRYYNIIYDAVDEIKAAMSGMLAPEKRETTTGTVEVRQVFRVPKVGAVAGCMVTDGVVKRNSLVRVLRNNVVIHDGELDSLKRFKDDVKEVKQGFECGLSIKNFNDVQEGDQLEVYEITEVARTL.

Residues 53–77 (SHGQADDSARKKITLTKRETSEIRQ) are compositionally biased toward basic and acidic residues. The disordered stretch occupies residues 53-377 (SHGQADDSAR…RSNFQAPTEP (325 aa)). Over residues 78–87 (SDATGKTRTV) the composition is skewed to polar residues. 4 stretches are compositionally biased toward basic and acidic residues: residues 98–110 (IKRDDAAPEHQAD), 123–183 (EEAR…KAEE), 197–250 (DTSR…EAEA), and 267–278 (PSERKAEEKKAE). Positions 343 to 356 (SSGGVGGWRGGPRG) are enriched in gly residues. The tr-type G domain maps to 463–632 (PRPPVVTVMG…SLQAEVLELK (170 aa)). A G1 region spans residues 472–479 (GHVDHGKT). 472–479 (GHVDHGKT) contacts GTP. The segment at 497-501 (GITQH) is G2. A G3 region spans residues 518–521 (DTPG). Residues 518–522 (DTPGH) and 572–575 (NKVD) each bind GTP. Residues 572–575 (NKVD) form a G4 region. Residues 608 to 610 (SAK) are G5.

The protein belongs to the TRAFAC class translation factor GTPase superfamily. Classic translation factor GTPase family. IF-2 subfamily.

It is found in the cytoplasm. Functionally, one of the essential components for the initiation of protein synthesis. Protects formylmethionyl-tRNA from spontaneous hydrolysis and promotes its binding to the 30S ribosomal subunits. Also involved in the hydrolysis of GTP during the formation of the 70S ribosomal complex. This is Translation initiation factor IF-2 from Cupriavidus taiwanensis (strain DSM 17343 / BCRC 17206 / CCUG 44338 / CIP 107171 / LMG 19424 / R1) (Ralstonia taiwanensis (strain LMG 19424)).